The sequence spans 796 residues: Polyribonucleotide nucleotidyltransferase (796 aa).

Residues D490 and D496 each contribute to the Mg(2+) site. The KH domain occupies 557 to 616; it reads PRIESIFINKDKIRNVIGSGGKNIRDICEKTGAKIEIIQDGTVMIYAVNNEAVEYAKSMI. Residues 626–693 form the S1 motif domain; it reads GKVFEGTVVE…DREHIQLSMR (68 aa). Low complexity-rich tracts occupy residues 717 to 728, 747 to 759, and 769 to 784; these read DDSCGSTGGSSF, GGSSRSSRRNSNG, and SSNGFGNNNRSFSNSR. The segment at 717 to 796 is disordered; the sequence is DDSCGSTGGS…HDVPRKPRFF (80 aa). A compositionally biased stretch (basic and acidic residues) spans 785–796; it reads NGHDVPRKPRFF.

The protein belongs to the polyribonucleotide nucleotidyltransferase family. It depends on Mg(2+) as a cofactor.

Its subcellular location is the cytoplasm. It catalyses the reaction RNA(n+1) + phosphate = RNA(n) + a ribonucleoside 5'-diphosphate. Its function is as follows. Involved in mRNA degradation. Catalyzes the phosphorolysis of single-stranded polyribonucleotides processively in the 3'- to 5'-direction. This chain is Polyribonucleotide nucleotidyltransferase, found in Ehrlichia chaffeensis (strain ATCC CRL-10679 / Arkansas).